Reading from the N-terminus, the 284-residue chain is Pantothenate synthetase (284 aa).

30–37 lines the ATP pocket; it reads MGNLHDGH. The active-site Proton donor is the histidine 37. Glutamine 61 contributes to the (R)-pantoate binding site. Glutamine 61 lines the beta-alanine pocket. An ATP-binding site is contributed by 149-152; the sequence is GEKD. Glutamine 155 lines the (R)-pantoate pocket. Residues valine 178 and 186–189 each bind ATP; that span reads LSSR.

The protein belongs to the pantothenate synthetase family. Homodimer.

It localises to the cytoplasm. It carries out the reaction (R)-pantoate + beta-alanine + ATP = (R)-pantothenate + AMP + diphosphate + H(+). The protein operates within cofactor biosynthesis; (R)-pantothenate biosynthesis; (R)-pantothenate from (R)-pantoate and beta-alanine: step 1/1. In terms of biological role, catalyzes the condensation of pantoate with beta-alanine in an ATP-dependent reaction via a pantoyl-adenylate intermediate. The chain is Pantothenate synthetase from Enterobacter sp. (strain 638).